Here is a 427-residue protein sequence, read N- to C-terminus: O-methyltransferase PaMT (427 aa).

The S-adenosyl-L-methionine site is built by tryptophan 230 and aspartate 281. The Proton acceptor role is filled by histidine 326.

The protein belongs to the class I-like SAM-binding methyltransferase superfamily. Cation-independent O-methyltransferase family. COMT subfamily. The cofactor is S-adenosyl-L-methionine.

The protein operates within mycotoxin biosynthesis. In terms of biological role, O-methyltransferase; part of the 2 gene clusters that mediate the biosynthesis of fusicoccins, diterpene glucosides that display phytohormone-like activity and function as potent activators of plasma membrane H(+)-ATPases in plants by modifying 14-3-3 proteins and cause the plant disease constriction canker. The first step in the pathway is performed by the fusicoccadiene synthase PaFS that possesses both prenyl transferase and terpene cyclase activity, converting isopentenyl diphosphate and dimethylallyl diphosphate into geranylgeranyl diphosphate (GGDP) and successively converting GGDP into fusicocca-2,10(14)-diene, a precursor for fusicoccin H. The second step is the oxidation at the C-8 position by the cytochrome P450 monooxygenase PaP450-2 to yield fusicocca-2,10(14)-diene-8-beta-ol. The cytochrome P450 monooxygenase PaP450-1 then catalyzes the hydroxylation at the C-16 position to produce fusicocca-2,10(14)-diene-8-beta,16-diol. The dioxygenase fc-dox then catalyzes the 16-oxydation of fusicocca-2,10(14)-diene-8-beta,16-diol to yield an aldehyde (8-beta-hydroxyfusicocca-1,10(14)-dien-16-al). The short-chain dehydrogenase/reductase fc-sdr catalyzes the reduction of the aldehyde to yield fusicocca-1,10(14)-diene-8-beta,16-diol. The next step is the hydroxylation at C-9 performed by the cytochrome P450 monooxygenase PaP450-3 that leads to fusicoccin H aglycon which is glycosylated to fusicoccin H by the O-glycosyltransferase PaGT. Hydroxylation at C-12 by the cytochrome P450 monooxygenase PaP450-4 leads then to the production of fusicoccin Q and is followed by methylation by the O-methyltransferase PaMT to yield fusicoccin P. Fusicoccin P is further converted to fusicoccin J via prenylation by the O-glucose prenyltransferase PaPT. Cytochrome P450 monooxygenase PaP450-5 then performs hydroxylation at C-19 to yield dideacetyl-fusicoccin A which is acetylated to 3'-O-deacetyl-fusicoccin A by the O-acetyltransferase PaAT-2. Finally, a another acetylation by the O-acetyltransferase PaAT-1 yields fusicoccin A. The sequence is that of O-methyltransferase PaMT from Phomopsis amygdali (Fusicoccum amygdali).